The chain runs to 405 residues: Dynactin subunit 2 (405 aa).

The interval 1 to 25 (MADPKYADLPGIARNEPDVYETSDL) is disordered. Alanine 2 bears the N-acetylalanine mark. Tyrosine 6 bears the Phosphotyrosine mark. At serine 85 the chain carries Phosphoserine. Tyrosine 88 carries the phosphotyrosine modification. Residues 105-132 (YQRLLHEVQELTTEVEKIKMTVKESATE) are a coiled coil. Threonine 136 carries the phosphothreonine modification. The disordered stretch occupies residues 187–207 (KNTKGAGSGGKTTSGSPPDSS). Serine 324 carries the phosphoserine modification.

The protein belongs to the dynactin subunit 2 family. Subunit of dynactin, a multiprotein complex part of a tripartite complex with dynein and a adapter, such as BICDL1, BICD2 or HOOK3. The dynactin complex is built around ACTR1A/ACTB filament and consists of an actin-related filament composed of a shoulder domain, a pointed end and a barbed end. Its length is defined by its flexible shoulder domain. The soulder is composed of 2 DCTN1 subunits, 4 DCTN2 and 2 DCTN3. The 4 DCNT2 (via N-terminus) bind the ACTR1A filament and act as molecular rulers to determine the length. The pointed end is important for binding dynein-dynactin cargo adapters and consists of 4 subunits: ACTR10, DCNT4, DCTN5 and DCTN6. The barbed end is composed of a CAPZA1:CAPZB heterodimers, which binds ACTR1A/ACTB filament and dynactin and stabilizes dynactin. Interacts with BICD2 and CEP135. Interacts with DYNAP. Interacts with ECPAS. Interacts with MAPRE1.

The protein localises to the cytoplasm. Its subcellular location is the cytoskeleton. The protein resides in the microtubule organizing center. It localises to the centrosome. It is found in the membrane. In terms of biological role, part of the dynactin complex that activates the molecular motor dynein for ultra-processive transport along microtubules. In the dynactin soulder domain, binds the ACTR1A filament and acts as a molecular ruler to determine the length. Modulates cytoplasmic dynein binding to an organelle, and plays a role in prometaphase chromosome alignment and spindle organization during mitosis. Involved in anchoring microtubules to centrosomes. May play a role in synapse formation during brain development. In Sus scrofa (Pig), this protein is Dynactin subunit 2 (DCTN2).